A 293-amino-acid chain; its full sequence is Probable 2-(5''-triphosphoribosyl)-3'-dephosphocoenzyme-A synthase (293 aa).

The protein belongs to the CitG/MdcB family.

It carries out the reaction 3'-dephospho-CoA + ATP = 2'-(5''-triphospho-alpha-D-ribosyl)-3'-dephospho-CoA + adenine. Involved in the formation of 2-(5''-phosphoribosyl)-3'-dephosphocoenzyme-A, the prosthetic group of the acyl-carrier protein of the malonate decarboxylase. This chain is Probable 2-(5''-triphosphoribosyl)-3'-dephosphocoenzyme-A synthase, found in Pseudomonas aeruginosa (strain ATCC 15692 / DSM 22644 / CIP 104116 / JCM 14847 / LMG 12228 / 1C / PRS 101 / PAO1).